Consider the following 81-residue polypeptide: Acyl carrier protein (81 aa).

The Carrier domain occupies 4-79; the sequence is AEIKDKVYDI…QAIDYIVNKK (76 aa). S39 is subject to O-(pantetheine 4'-phosphoryl)serine.

It belongs to the acyl carrier protein (ACP) family. 4'-phosphopantetheine is transferred from CoA to a specific serine of apo-ACP by AcpS. This modification is essential for activity because fatty acids are bound in thioester linkage to the sulfhydryl of the prosthetic group.

Its subcellular location is the cytoplasm. Its pathway is lipid metabolism; fatty acid biosynthesis. Carrier of the growing fatty acid chain in fatty acid biosynthesis. This chain is Acyl carrier protein, found in Chlorobaculum tepidum (strain ATCC 49652 / DSM 12025 / NBRC 103806 / TLS) (Chlorobium tepidum).